The sequence spans 304 residues: Non-specific ribonucleoside hydrolase RihC (304 aa).

The active site involves histidine 233.

This sequence belongs to the IUNH family. RihC subfamily.

In terms of biological role, hydrolyzes both purine and pyrimidine ribonucleosides with a broad-substrate specificity. The protein is Non-specific ribonucleoside hydrolase RihC of Escherichia coli O6:H1 (strain CFT073 / ATCC 700928 / UPEC).